The sequence spans 519 residues: PTS system mannitol-specific EIICB component (519 aa).

The Cytoplasmic segment spans residues 1–30 (MAQTETQEKKGLGRKVQAFGSFLSSMIMPN). A PTS EIIC type-2 domain is found at 19–351 (FGSFLSSMIM…MKFTKEPKQD (333 aa)). A helical membrane pass occupies residues 31–52 (IGAFIAWGFIAAIFIDNGWYPN). At 53–56 (KELS) the chain is on the extracellular side. Residues 57–77 (QLAGPMITYLIPLLIAFSGGR) form a helical membrane-spanning segment. The Cytoplasmic segment spans residues 78 to 141 (LIHDLRGGIV…QGFEMLFNNF (64 aa)). A helical membrane pass occupies residues 142–163 (SAGILAFIMTILGFKLLAPIMQ). Topologically, residues 164 to 172 (FIMHILSVA) are extracellular. Residues 173–193 (VEFLVHLHLLPIVSIIVEPAK) form a helical membrane-spanning segment. Residues 194–280 (ILFLNNAINH…VLMRPLLFIA (87 aa)) lie on the Cytoplasmic side of the membrane. A helical membrane pass occupies residues 281–300 (VILGGMTGVATYQATGFGFK). At 301-320 (SPASPGSFIVYCLNAPKGEF) the chain is on the extracellular side. A helical membrane pass occupies residues 321-342 (LHMVLGVFLAALVSFVVAALIM). The Cytoplasmic portion of the chain corresponds to 343–519 (KFTKEPKQDL…NNLKKDQDKA (177 aa)). The disordered stretch occupies residues 366-406 (KSSVSSKLTGATTGTGAAGVAANKANGEDQNEASSEDEEED). Residues 367–387 (SSVSSKLTGATTGTGAAGVAA) show a composition bias toward low complexity. The segment covering 394-406 (DQNEASSEDEEED) has biased composition (acidic residues). One can recognise a PTS EIIB type-2 domain in the interval 425-519 (DHVIFACDAG…NNLKKDQDKA (95 aa)). Cysteine 431 functions as the Phosphocysteine intermediate; for EIIB activity in the catalytic mechanism. The residue at position 431 (cysteine 431) is a Phosphocysteine; by EIIA.

In terms of assembly, homodimer.

It localises to the cell membrane. The enzyme catalyses D-mannitol(out) + N(pros)-phospho-L-histidyl-[protein] = D-mannitol 1-phosphate(in) + L-histidyl-[protein]. The phosphoenolpyruvate-dependent sugar phosphotransferase system (sugar PTS), a major carbohydrate active transport system, catalyzes the phosphorylation of incoming sugar substrates concomitantly with their translocation across the cell membrane. The enzyme II CmtAB PTS system is involved in D-mannitol transport. This chain is PTS system mannitol-specific EIICB component (mtlA), found in Staphylococcus haemolyticus (strain JCSC1435).